A 780-amino-acid chain; its full sequence is Protein phosphatase 1 regulatory subunit 21 (780 aa).

2 coiled-coil regions span residues 1 to 207 and 556 to 607; these read MASA…LKTL and ESRE…LKNT. Residues 84 to 104 are disordered; that stretch reads EPRGKKNKKSGESSSQLSQEQ. Over residues 95–104 the composition is skewed to low complexity; sequence ESSSQLSQEQ. Thr-652 carries the phosphothreonine modification. Residues 693 to 742 adopt a coiled-coil conformation; the sequence is YAECRALSKRLALAEKSKEALTEEMKLASQNISRLQDELTTTKRSYEDQL. Residues 760–780 form a disordered region; it reads REEIDTLKMSSKGNSKKNKSR.

In terms of assembly, component of the FERRY complex, composed of five subunits: TBCK, PPP1R21, FERRY3, CRYZL1 and GATAD1, with a ratio of 1:2:1:2:4 respectively. PPP1R21 serves as a binding hub connecting all five complex subunits to mediate the binding to specific mitochondrial mRNAs. Interacts with the GTP-bound form of RAB5A (via its C-terminal region); linking the mRNP complex onto trafficking endosomes for active mRNA transport. Interacts with PPP1CA.

It is found in the early endosome. Its function is as follows. Component of the FERRY complex (Five-subunit Endosomal Rab5 and RNA/ribosome intermediary). The FERRY complex directly interacts with mRNAs and RAB5A, and functions as a RAB5A effector involved in the localization and the distribution of specific mRNAs most likely by mediating their endosomal transport. The complex recruits mRNAs and ribosomes to early endosomes through direct mRNA-interaction. In the complex, PPP1R21 serves as a binding hub connecting all five complex subunits and mediating the binding to mRNA and early endosomes via RAB5A. Putative regulator of protein phosphatase 1 (PP1) activity. May play a role in the endosomal sorting process or in endosome maturation pathway. This is Protein phosphatase 1 regulatory subunit 21 (PPP1R21) from Homo sapiens (Human).